The following is a 250-amino-acid chain: Keratin-associated protein 9-1 (250 aa).

32 consecutive repeat copies span residues 8–12, 13–17, 18–22, 37–41, 42–46, 51–55, 56–60, 61–65, 66–70, 75–79, 80–84, 85–89, 90–94, 95–99, 105–109, 114–117, 118–121, 133–137, 138–142, 143–147, 153–157, 162–166, 167–171, 176–180, 185–189, 190–194, 214–218, 219–223, 229–233, 234–238, 239–243, and 244–248. The interval 8–248 is 32 X 5 AA repeats of C-C-[CGSVRQH]-[SQTNP]-[PTSI]; the sequence is CCQPTCCRTT…CCVSSCCQPS (241 aa).

The protein belongs to the KRTAP type 9 family. In terms of assembly, interacts with hair keratins.

Its function is as follows. In the hair cortex, hair keratin intermediate filaments are embedded in an interfilamentous matrix, consisting of hair keratin-associated proteins (KRTAP), which are essential for the formation of a rigid and resistant hair shaft through their extensive disulfide bond cross-linking with abundant cysteine residues of hair keratins. The matrix proteins include the high-sulfur and high-glycine-tyrosine keratins. The protein is Keratin-associated protein 9-1 of Homo sapiens (Human).